Consider the following 148-residue polypeptide: NPC intracellular cholesterol transporter 2 homolog a (148 aa).

Residues methionine 1–alanine 16 form the signal peptide. Intrachain disulfides connect cysteine 24–cysteine 140, cysteine 39–cysteine 46, and cysteine 92–cysteine 99. N-linked (GlcNAc...) asparagine glycosylation occurs at asparagine 51.

Belongs to the NPC2 family. In terms of tissue distribution, broadly expressed with a higher level of expression in many tissues, including midgut, salivary gland and ventral nerve cord.

The protein resides in the secreted. Its function is as follows. Functions redundantly with Npc2b in regulating sterol homeostasis and ecdysteroid biosynthesis, probably by controlling the availability of sterol substrate. This chain is NPC intracellular cholesterol transporter 2 homolog a, found in Drosophila melanogaster (Fruit fly).